The following is a 324-amino-acid chain: MATH domain and coiled-coil domain-containing protein At3g44790 (324 aa).

The region spanning 3–125 (YEKFTWVIKN…NNEVKIVVEV (123 aa)) is the MATH domain. Positions 241–309 (FKVDWLERKL…ALLEKEKAKS (69 aa)) form a coiled coil.

In Arabidopsis thaliana (Mouse-ear cress), this protein is MATH domain and coiled-coil domain-containing protein At3g44790.